A 371-amino-acid chain; its full sequence is Transposase for insertion sequence element IS421 (371 aa).

Belongs to the transposase 11 family.

In terms of biological role, involved in the transposition of the insertion sequence IS421. The protein is Transposase for insertion sequence element IS421 of Escherichia coli.